The following is a 297-amino-acid chain: Mycothiol acetyltransferase (297 aa).

2 consecutive N-acetyltransferase domains span residues Val-7–Arg-156 and Val-153–His-297. Glu-38 serves as a coordination point for 1D-myo-inositol 2-(L-cysteinylamino)-2-deoxy-alpha-D-glucopyranoside. Position 79–81 (Val-79–Val-81) interacts with acetyl-CoA. 1D-myo-inositol 2-(L-cysteinylamino)-2-deoxy-alpha-D-glucopyranoside-binding residues include Glu-180, Lys-219, and Glu-227. Residues Val-231–Val-233 and Gln-238–Arg-244 each bind acetyl-CoA. Tyr-265 contributes to the 1D-myo-inositol 2-(L-cysteinylamino)-2-deoxy-alpha-D-glucopyranoside binding site. Asn-270–Arg-275 lines the acetyl-CoA pocket.

Belongs to the acetyltransferase family. MshD subfamily. As to quaternary structure, monomer.

The catalysed reaction is 1D-myo-inositol 2-(L-cysteinylamino)-2-deoxy-alpha-D-glucopyranoside + acetyl-CoA = mycothiol + CoA + H(+). Its function is as follows. Catalyzes the transfer of acetyl from acetyl-CoA to desacetylmycothiol (Cys-GlcN-Ins) to form mycothiol. This Thermomonospora curvata (strain ATCC 19995 / DSM 43183 / JCM 3096 / KCTC 9072 / NBRC 15933 / NCIMB 10081 / Henssen B9) protein is Mycothiol acetyltransferase.